Reading from the N-terminus, the 138-residue chain is Acidic phospholipase A2 Drk-a1 (138 aa).

Residues 1–16 (MRTLWIVAVCLIGVEG) form the signal peptide. 7 disulfides stabilise this stretch: C42-C131, C44-C60, C59-C111, C65-C138, C66-C104, C73-C97, and C91-C102. Residues Y43, G45, and G47 each coordinate Ca(2+). H63 is an active-site residue. D64 contributes to the Ca(2+) binding site. D105 is an active-site residue.

It belongs to the phospholipase A2 family. Group II subfamily. D49 sub-subfamily. It depends on Ca(2+) as a cofactor. Expressed by the venom gland.

It is found in the secreted. It catalyses the reaction a 1,2-diacyl-sn-glycero-3-phosphocholine + H2O = a 1-acyl-sn-glycero-3-phosphocholine + a fatty acid + H(+). In terms of biological role, snake venom phospholipase A2 (PLA2) that exhibits high hydrolytic activities and shows strong preference for the anionic micelles (dPPC with deoxycholate) to the zwitterionic micelles (dPPC with Triton X-100). PLA2 catalyzes the calcium-dependent hydrolysis of the 2-acyl groups in 3-sn-phosphoglycerides. In Daboia russelii (Russel's viper), this protein is Acidic phospholipase A2 Drk-a1.